A 284-amino-acid polypeptide reads, in one-letter code: Protoheme IX farnesyltransferase (284 aa).

The next 9 helical transmembrane spans lie at 2 to 19 (SLVV…PVTV), 23 to 45 (IALT…NMWS), 69 to 89 (GEAL…LGLA), 92 to 112 (LFAA…YSMW), 121 to 141 (IVIG…VATG), 148 to 168 (LFMF…LALF), 194 to 214 (VLVY…TGTG), 217 to 237 (LYLA…VRTW), and 263 to 283 (LFLH…GLGG).

It belongs to the UbiA prenyltransferase family. Protoheme IX farnesyltransferase subfamily. In terms of assembly, interacts with CtaA.

It is found in the cell inner membrane. The catalysed reaction is heme b + (2E,6E)-farnesyl diphosphate + H2O = Fe(II)-heme o + diphosphate. Its pathway is porphyrin-containing compound metabolism; heme O biosynthesis; heme O from protoheme: step 1/1. Functionally, converts heme B (protoheme IX) to heme O by substitution of the vinyl group on carbon 2 of heme B porphyrin ring with a hydroxyethyl farnesyl side group. In Cereibacter sphaeroides (Rhodobacter sphaeroides), this protein is Protoheme IX farnesyltransferase.